Consider the following 406-residue polypeptide: Dematin (406 aa).

2 disordered regions span residues Met-1–Ile-30 and Leu-78–Asn-333. The span at Ser-11–Ser-29 shows a compositional bias: low complexity. Residues Ser-16, Ser-18, Ser-26, Ser-92, Ser-96, Ser-105, Ser-110, Ser-113, Ser-157, and Ser-227 each carry the phosphoserine modification. A compositionally biased stretch (polar residues) spans Ser-105–Ala-114. Residues Glu-217 to Gly-228 are compositionally biased toward acidic residues. The tract at residues Asp-225–Pro-309 is interaction with RASGRF2. Basic and acidic residues-rich tracts occupy residues Glu-229–Ser-243 and Ile-253–Leu-262. 8 positions are modified to phosphoserine: Ser-270, Ser-280, Ser-290, Ser-304, Ser-316, Ser-334, Ser-373, and Ser-384. Polar residues predominate over residues His-282–Glu-323. The HP domain occupies Val-338–Phe-406. Ser-404 bears the Phosphoserine; by PKA mark.

Belongs to the villin/gelsolin family. Monomeric; under reducing conditions. Self-associates. Exists under oxidizing condition as a trimer linked by disulfide bonds. Found in a complex with DMTN, F-actin and spectrin. Found in a complex with ADD2, DMTN and SLC2A1. Interacts with F-actin, ITPKB and spectrin. Interacts with SLC2A1 (via C-terminus cytoplasmic region). Interacts with RASGRF2. Post-translationally, phosphorylated. Phosphorylation at Ser-404 by PKA causes the C-terminal headpiece domain to associate with the N-terminal core domain, and leads to the inhibition of its actin bundling activity.

The protein localises to the cytoplasm. It localises to the cytosol. The protein resides in the perinuclear region. It is found in the cytoskeleton. Its subcellular location is the cell membrane. The protein localises to the membrane. It localises to the endomembrane system. The protein resides in the cell projection. Its function is as follows. Membrane-cytoskeleton-associated protein with F-actin-binding activity that induces F-actin bundles formation and stabilization. Its F-actin-bundling activity is reversibly regulated upon its phosphorylation by the cAMP-dependent protein kinase A (PKA). Binds to the erythrocyte membrane glucose transporter-1 SLC2A1/GLUT1, and hence stabilizes and attaches the spectrin-actin network to the erythrocytic plasma membrane. Plays a role in maintaining the functional integrity of PKA-activated erythrocyte shape and the membrane mechanical properties. Also plays a role as a modulator of actin dynamics in fibroblasts; acts as a negative regulator of the RhoA activation pathway. In platelets, functions as a regulator of internal calcium mobilization across the dense tubular system that affects platelet granule secretion pathways and aggregation. Also required for the formation of a diverse set of cell protrusions, such as filopodia and lamellipodia, necessary for platelet cell spreading, motility and migration. Acts as a tumor suppressor and inhibits malignant cell transformation. The polypeptide is Dematin (DMTN) (Bos taurus (Bovine)).